Reading from the N-terminus, the 153-residue chain is Regulatory protein RecX (153 aa).

The protein belongs to the RecX family.

The protein localises to the cytoplasm. Modulates RecA activity. This chain is Regulatory protein RecX, found in Vibrio vulnificus (strain CMCP6).